Consider the following 397-residue polypeptide: Elongation factor Tu (397 aa).

In terms of domain architecture, tr-type G spans 10 to 207 (LPHVNVGTIG…TLDSYIPEPV (198 aa)). Positions 19–26 (GHVDHGKT) are G1. GTP is bound at residue 19–26 (GHVDHGKT). T26 contributes to the Mg(2+) binding site. The tract at residues 60–64 (GITIN) is G2. Residues 81-84 (DCPG) are G3. Residues 81 to 85 (DCPGH) and 136 to 139 (NKAD) each bind GTP. The interval 136-139 (NKAD) is G4. Residues 174–176 (SAR) are G5.

Belongs to the TRAFAC class translation factor GTPase superfamily. Classic translation factor GTPase family. EF-Tu/EF-1A subfamily. In terms of assembly, monomer.

The protein resides in the cytoplasm. The catalysed reaction is GTP + H2O = GDP + phosphate + H(+). In terms of biological role, GTP hydrolase that promotes the GTP-dependent binding of aminoacyl-tRNA to the A-site of ribosomes during protein biosynthesis. In Pseudomonas putida (strain ATCC 700007 / DSM 6899 / JCM 31910 / BCRC 17059 / LMG 24140 / F1), this protein is Elongation factor Tu.